The sequence spans 652 residues: ATP-dependent RNA helicase DDX51 (652 aa).

Residues 1-145 are disordered; that stretch reads MALFTINRYL…KAEKAEELTS (145 aa). The span at 25–34 shows a compositional bias: low complexity; it reads KALLAKLQKQ. Composition is skewed to basic and acidic residues over residues 66–77 and 107–122; these read LQETKGKIKKSE and VIVKIEENESENEKSV. Residues 212–220 carry the Q motif motif; the sequence is FFPVQAEVI. Positions 234 to 442 constitute a Helicase ATP-binding domain; that stretch reads GPGGYRPRDV…LLDLHQPRLF (209 aa). An ATP-binding site is contributed by 247 to 254; that stretch reads APTGSGKT. The DEAD box motif lies at 362–365; sequence DEAD. In terms of domain architecture, Helicase C-terminal spans 480 to 626; sequence IILHFLLRLK…KQHVHPEALK (147 aa).

Belongs to the DEAD box helicase family. DDX51/DBP6 subfamily.

The protein localises to the nucleus. It is found in the nucleolus. It carries out the reaction ATP + H2O = ADP + phosphate + H(+). In terms of biological role, ATP-binding RNA helicase involved in the biogenesis of 60S ribosomal subunits. In Danio rerio (Zebrafish), this protein is ATP-dependent RNA helicase DDX51 (ddx51).